Consider the following 86-residue polypeptide: MAHKKGTGSTRNGRDSNSKRLGVKAYGGEKVTAGSILIRQRGTSFLPGINVGKGKDDTLFALKEGTVSFESIKRNLRNRKRVNIVI.

The disordered stretch occupies residues 1 to 24 (MAHKKGTGSTRNGRDSNSKRLGVK).

The protein belongs to the bacterial ribosomal protein bL27 family.

This Prochlorococcus marinus (strain MIT 9301) protein is Large ribosomal subunit protein bL27.